Consider the following 405-residue polypeptide: Na(+)/H(+) antiporter NhaA 1 (405 aa).

Transmembrane regions (helical) follow at residues phenylalanine 20–valine 40, leucine 68–valine 88, leucine 105–valine 125, glycine 134–glycine 154, leucine 163–phenylalanine 183, alanine 186–methionine 206, isoleucine 214–histidine 234, glycine 263–valine 283, isoleucine 301–valine 321, tryptophan 334–isoleucine 354, and isoleucine 371–threonine 391.

This sequence belongs to the NhaA Na(+)/H(+) (TC 2.A.33) antiporter family.

The protein localises to the cell inner membrane. The enzyme catalyses Na(+)(in) + 2 H(+)(out) = Na(+)(out) + 2 H(+)(in). Functionally, na(+)/H(+) antiporter that extrudes sodium in exchange for external protons. This is Na(+)/H(+) antiporter NhaA 1 from Erythrobacter litoralis (strain HTCC2594).